The chain runs to 102 residues: Scorpine-like-2 (102 aa).

The first 19 residues, 1 to 19, serve as a signal peptide directing secretion; that stretch reads MQTQCTVLQLLVLVALCSC. A BetaSPN-type CS-alpha/beta domain is found at 63 to 102; sequence QQLCLIVDTVQWCNKSCLAAENKEGYCHGTKCKCGIKVSY. Cystine bridges form between Cys-66/Cys-89, Cys-75/Cys-94, and Cys-79/Cys-96.

It belongs to the long chain scorpion toxin family. Class 3 subfamily. Expressed by the venom gland.

The protein localises to the secreted. Inhibits voltage-gated potassium channels. This is Scorpine-like-2 from Urodacus yaschenkoi (Inland robust scorpion).